The primary structure comprises 459 residues: UDP-N-acetylmuramoylalanine--D-glutamate ligase (459 aa).

ATP is bound at residue 120-126 (GSNGKTT).

This sequence belongs to the MurCDEF family.

It is found in the cytoplasm. It catalyses the reaction UDP-N-acetyl-alpha-D-muramoyl-L-alanine + D-glutamate + ATP = UDP-N-acetyl-alpha-D-muramoyl-L-alanyl-D-glutamate + ADP + phosphate + H(+). The protein operates within cell wall biogenesis; peptidoglycan biosynthesis. Its function is as follows. Cell wall formation. Catalyzes the addition of glutamate to the nucleotide precursor UDP-N-acetylmuramoyl-L-alanine (UMA). This Lactobacillus helveticus (strain DPC 4571) protein is UDP-N-acetylmuramoylalanine--D-glutamate ligase.